The chain runs to 123 residues: N(4)-acetylcytidine amidohydrolase (123 aa).

The 96-residue stretch at 6-101 (ITFYQRFEAD…EIIFWVIQFS (96 aa)) folds into the ASCH domain. K21 serves as the catalytic Proton acceptor. S24 serves as the catalytic Nucleophile. E74 acts as the Proton donor in catalysis.

Belongs to the N(4)-acetylcytidine amidohydrolase family.

The enzyme catalyses N(4)-acetylcytidine + H2O = cytidine + acetate + H(+). It catalyses the reaction N(4)-acetyl-2'-deoxycytidine + H2O = 2'-deoxycytidine + acetate + H(+). The catalysed reaction is N(4)-acetylcytosine + H2O = cytosine + acetate + H(+). Functionally, catalyzes the hydrolysis of N(4)-acetylcytidine (ac4C). This is N(4)-acetylcytidine amidohydrolase from Haemophilus influenzae (strain ATCC 51907 / DSM 11121 / KW20 / Rd).